A 77-amino-acid polypeptide reads, in one-letter code: Small ribosomal subunit protein bS21 (77 aa).

The segment covering 38–52 has biased composition (basic and acidic residues); sequence KPSEKRAREKAEAVR. The tract at residues 38–77 is disordered; the sequence is KPSEKRAREKAEAVRRTRKLARKRAQREGLISNGRGSPLK. The span at 53–62 shows a compositional bias: basic residues; it reads RTRKLARKRA.

Belongs to the bacterial ribosomal protein bS21 family.

This chain is Small ribosomal subunit protein bS21, found in Bartonella henselae (strain ATCC 49882 / DSM 28221 / CCUG 30454 / Houston 1) (Rochalimaea henselae).